The sequence spans 445 residues: UNC93-like protein MFSD11 (445 aa).

Residues 8–28 (LLNIIILGIGFMFMFTAFQTS) form a helical membrane-spanning segment. The N-linked (GlcNAc...) asparagine glycan is linked to asparagine 40. The next 4 membrane-spanning stretches (helical) occupy residues 53 to 73 (AIIY…VAVI), 74 to 94 (GCQM…AMFI), 98 to 118 (TWSF…LWTA), and 138 to 158 (IFWA…YLAW). Residue asparagine 163 is glycosylated (N-linked (GlcNAc...) asparagine). 7 consecutive transmembrane segments (helical) span residues 170–190 (RTVF…FFLI), 239–259 (MLLL…YSGV), 277–297 (LIGL…GLFG), 309–329 (PVVI…YLYM), 345–365 (AFIN…GLGD), 385–405 (APAF…AFFY), and 415–435 (LLIL…VEWG).

This sequence belongs to the unc-93 family.

The protein resides in the membrane. In Xenopus tropicalis (Western clawed frog), this protein is UNC93-like protein MFSD11 (mfsd11).